A 137-amino-acid chain; its full sequence is Large ribosomal subunit protein uL16 (137 aa).

This sequence belongs to the universal ribosomal protein uL16 family. In terms of assembly, part of the 50S ribosomal subunit.

In terms of biological role, binds 23S rRNA and is also seen to make contacts with the A and possibly P site tRNAs. In Magnetococcus marinus (strain ATCC BAA-1437 / JCM 17883 / MC-1), this protein is Large ribosomal subunit protein uL16.